The following is a 298-amino-acid chain: GTPase Era (298 aa).

The Era-type G domain maps to 8–176 (RSGSVAVIGR…VSDLLKLVPE (169 aa)). The segment at 16–23 (GRPNVGKS) is G1. 16-23 (GRPNVGKS) contacts GTP. The interval 42-46 (QTTRH) is G2. The G3 stretch occupies residues 63-66 (DTPG). GTP is bound by residues 63–67 (DTPGL) and 125–128 (NKVD). A G4 region spans residues 125–128 (NKVD). The interval 155–157 (VSA) is G5. A KH type-2 domain is found at 199 to 283 (VREQLMRQLG…FLETWVRVRE (85 aa)).

Belongs to the TRAFAC class TrmE-Era-EngA-EngB-Septin-like GTPase superfamily. Era GTPase family. Monomer.

It localises to the cytoplasm. It is found in the cell inner membrane. Functionally, an essential GTPase that binds both GDP and GTP, with rapid nucleotide exchange. Plays a role in 16S rRNA processing and 30S ribosomal subunit biogenesis and possibly also in cell cycle regulation and energy metabolism. The chain is GTPase Era from Xanthomonas campestris pv. campestris (strain 8004).